The following is a 227-amino-acid chain: 2,3-bisphosphoglycerate-dependent phosphoglycerate mutase (227 aa).

Residues 7-14 (RHGQSEWN), 20-21 (TG), Arg59, 86-89 (ERHY), Lys97, 113-114 (RR), and 182-183 (GN) each bind substrate. His8 serves as the catalytic Tele-phosphohistidine intermediate. The Proton donor/acceptor role is filled by Glu86.

The protein belongs to the phosphoglycerate mutase family. BPG-dependent PGAM subfamily. In terms of assembly, homodimer.

It carries out the reaction (2R)-2-phosphoglycerate = (2R)-3-phosphoglycerate. Its pathway is carbohydrate degradation; glycolysis; pyruvate from D-glyceraldehyde 3-phosphate: step 3/5. In terms of biological role, catalyzes the interconversion of 2-phosphoglycerate and 3-phosphoglycerate. This Neisseria meningitidis serogroup A / serotype 4A (strain DSM 15465 / Z2491) protein is 2,3-bisphosphoglycerate-dependent phosphoglycerate mutase.